A 305-amino-acid chain; its full sequence is Ribonuclease BN (305 aa).

Residues His64, His66, Asp68, His69, His141, Asp212, and His270 each coordinate Zn(2+). Asp68 (proton acceptor) is an active-site residue.

The protein belongs to the RNase Z family. RNase BN subfamily. As to quaternary structure, homodimer. It depends on Zn(2+) as a cofactor.

Zinc phosphodiesterase, which has both exoribonuclease and endoribonuclease activities. This Escherichia coli O45:K1 (strain S88 / ExPEC) protein is Ribonuclease BN.